Consider the following 577-residue polypeptide: MKVAVIGGGPSGLVTLKYLLAAHHFQPVDPIEVQLFESEDRVGGTFSYRTYDRAELVSSAQLTTFSDYRWHDKSVDYLSAVEYVEYLEGYCDRFGLRPHIRLSTQVEKVERTGKGKHRITVSHKGQTSTWDCDAVAVCSGLHVKPNIPSIPGLDRVPVVFHSSEYKHVRQLGQNTNVMVLGTGETGMDIAYFSVTADSTKSTTVCHRNGFVIGPKRLPETKLFGRVTSKTPGKALPVDLSRPYLFVNSYVHRKVRGALQTTLSRWAVKAGSWLVTGTTRGFDQWVGSLPKDKYDESHYFYCKSTKAMPYISAPYRSHSWVHRLRSSIVQAVLPDTGSRKIDLAPWPEYIDEDGVVHFEKNSRPDSKVLLQERRFKPDVLVLATGYTQSFPFLGSEYCTPDQADQRGIWRTGDASVGYIGFVRPSFGAIPPLAEMQVQVWVLNLINRLPGPLVADDSYRLFSNPSGRIEYGVDHDMFAHRLALDIGSAPSFFQALAHGWQVIVFWAMGGTLNTKFRLVGPWAWSGAPRIIHDELLDTVTGRRSTIDLLVALCIRIFQATSVVSSRPSKGDSEVTENRG.

Belongs to the FMO family. Requires FAD as cofactor.

Its pathway is secondary metabolite biosynthesis. Functionally, monooxygenase; part of the gene cluster that mediates the biosynthesis of the indole diterpenes penitrems. The geranylgeranyl diphosphate (GGPP) synthase penG catalyzes the first step in penitrem biosynthesis via conversion of farnesyl pyrophosphate and isopentyl pyrophosphate into geranylgeranyl pyrophosphate (GGPP). Condensation of indole-3-glycerol phosphate with GGPP by the prenyl transferase penC then forms 3-geranylgeranylindole (3-GGI). Epoxidation by the FAD-dependent monooxygenase penM leads to a epoxidized-GGI that is substrate of the terpene cyclase penB for cyclization to yield paspaline. Paspaline is subsequently converted to 13-desoxypaxilline by the cytochrome P450 monooxygenase penP, the latter being then converted to paxilline by the cytochrome P450 monooxygenase penQ. Paxilline is converted to beta-paxitriol via C-10 ketoreduction by the short-chain dehydrogenase PC-15 which can be monoprenylated at the C-20 by the indole diterpene prenyltransferase penD. A two-step elimination (acetylation and elimination) process performed by the O-acetyltransferase PC-16 and the P.simplicissimum ptmI-ortholog not yet identified in P.crustosum, leads to the production of the prenylated form of penijanthine. The FAD-linked oxidoreductase ptmO then converts the prenylated form of penijanthine into PC-M5 which is in turn transformed into PC-M4 by the aromatic dimethylallyltransferase PC-22. A series of oxidation steps involving 4 cytochrome P450 monooxygenases (PC-21, PC-05, PC-23, PC-20) and a FAD-dependent monooxygenase (PC-14) are required for the transformation of PC-M4 to penitrems A and E. Synthesis of these final products is proposed to proceed via penitrems D and C (PC-21, PC-05, PC-14) and penitrems B and F (PC-21, PC-05, PC-14, PC-23). This Penicillium crustosum (Blue mold fungus) protein is Monooxygenase PC-14.